The sequence spans 1503 residues: DNA-directed RNA polymerase subunit beta' (1503 aa).

The Zn(2+) site is built by C71, C73, C86, and C89. Residues D470, D472, and D474 each contribute to the Mg(2+) site. Residues C800, C874, C881, and C884 each contribute to the Zn(2+) site.

It belongs to the RNA polymerase beta' chain family. In terms of assembly, the RNAP catalytic core consists of 2 alpha, 1 beta, 1 beta' and 1 omega subunit. When a sigma factor is associated with the core the holoenzyme is formed, which can initiate transcription. The cofactor is Mg(2+). Zn(2+) serves as cofactor.

The enzyme catalyses RNA(n) + a ribonucleoside 5'-triphosphate = RNA(n+1) + diphosphate. DNA-dependent RNA polymerase catalyzes the transcription of DNA into RNA using the four ribonucleoside triphosphates as substrates. The sequence is that of DNA-directed RNA polymerase subunit beta' from Sulfurimonas denitrificans (strain ATCC 33889 / DSM 1251) (Thiomicrospira denitrificans (strain ATCC 33889 / DSM 1251)).